The following is an 874-amino-acid chain: MSLVEEIERVGNIGLAESFIIDNKIVYGEIGDDIRSATFSPVIGYHTPSEMLDLVESRMYVGYHNPKHMKGIIARGPENLIEEERVKSAIKYAAETFDNKVYKVKHRTFDVMESKREKLDEFLNFIDMAMSGNWFKKLTMTVKSSGSPLKMSEKFYRLPFQQMLMLDVIVAMSARCDLGEYIGLILNYSKTILGLDNMSAEKINEIGERLKKNISGYIIPRRCGKSSFSGCMIALVMAMCPSAGIKCLYTAHKKNQCTDMYSSVEKHVVALIKEFNRINEAKFLELVNKYKARKKLYKGFYYKAAHTPGKKDGALVVSFYKFTEAGRNIKTTDIPMAVNEFRSIVYKQKDTHRGATYNLMFVDETNFLQPAIFNELFPMLNTDKAKMICTSSQKNGQDAKPFVDIRNTRQDGTTTCVVEYVCPNHCMSLIRQTNVAFTVCNCNIFSQPLHINAGAGVRKIMAAFSVKTNKNMEVDDDDDSKSTMLSEIGIMPPGLTKNDILGMNNLQNMRLTSELGRYHFLSKKSNVLKELLVEPDAYSKTVLLYLDPTPTSYRSVDSVTYDRSLHAISAIAQKKTGEYVVLGIEEFTTQKYEKESHDASKAMASIIMAQVTVIHKIYEHFNEFILIPEVNSFDLDNVWYNCGLLLREAVETTDMDDVSILAPCMITESENGTNGKAMFGKKRKIVSELEGKKVIEDPKTKKLRLEFDADGETNILDDYSDGMAKTLTELSTTFKELEHELKHSGKKYKIGYRMNGDKVGRFIDFFSNIFNRKKFTVAENLFSASLGATMEIELAEYLLEKLDNVVIRTDVNKRGKKSYSVSGKSSNKNQHCADDLAVSAVMATSLYNYYRDFKITPEEALIKLQPIYEQGSRL.

This is an uncharacterized protein from Ostreid herpesvirus 1 (isolate France) (OsHV-1).